We begin with the raw amino-acid sequence, 775 residues long: Glutamine--tRNA ligase (775 aa).

N-acetylalanine is present on alanine 2. The residue at position 70 (serine 70) is a Phosphoserine. Residues glutamate 271–asparagine 273 and histidine 277–alanine 283 each bind ATP. An L-glutamine-binding site is contributed by aspartate 303. Lysine 309 is subject to N6-acetyllysine. An L-glutamine-binding site is contributed by tyrosine 438. Residues threonine 457, arginine 486–leucine 487, and valine 494–lysine 496 contribute to the ATP site. Phosphoserine is present on serine 495.

The protein belongs to the class-I aminoacyl-tRNA synthetase family. In terms of assembly, monomer. Part of a multisubunit complex that groups tRNA ligases for Arg (RARS1), Asp (DARS1), Gln (QARS1), Ile (IARS1), Leu (LARS1), Lys (KARS1), Met (MARS1) the bifunctional ligase for Glu and Pro (EPRS1) and the auxiliary subunits AIMP1/p43, AIMP2/p38 and EEF1E1/p18. Interacts with RARS1. Part of a complex composed of RARS1, QARS1 and AIMP1.

It is found in the cytoplasm. The protein localises to the cytosol. The enzyme catalyses tRNA(Gln) + L-glutamine + ATP = L-glutaminyl-tRNA(Gln) + AMP + diphosphate. Glutamine--tRNA ligase. Plays a critical role in brain development. This Mus musculus (Mouse) protein is Glutamine--tRNA ligase (Qars1).